The chain runs to 572 residues: AAA ATPase forming ring-shaped complexes (572 aa).

The span at 1–18 (MTTASQQTSSHSTASSTS) shows a compositional bias: low complexity. A disordered region spans residues 1–30 (MTTASQQTSSHSTASSTSRKGNNNDATPSL). A coiled-coil region spans residues 42-70 (TRNAKLVEMLKASRDKLDALNEQIRALSD). 258–263 (GCGKTL) provides a ligand contact to ATP. Residues 543 to 572 (VAHHNRKTTTETEATEPEGTDSGKGHTDAS) are disordered. A compositionally biased stretch (basic and acidic residues) spans 563–572 (DSGKGHTDAS).

The protein belongs to the AAA ATPase family. In terms of assembly, homohexamer. Assembles into a hexameric ring structure.

This chain is AAA ATPase forming ring-shaped complexes, found in Corynebacterium kroppenstedtii (strain DSM 44385 / JCM 11950 / CIP 105744 / CCUG 35717).